The sequence spans 281 residues: Ribosomal RNA small subunit methyltransferase A (281 aa).

N24, L26, G51, E72, D96, and N123 together coordinate S-adenosyl-L-methionine.

The protein belongs to the class I-like SAM-binding methyltransferase superfamily. rRNA adenine N(6)-methyltransferase family. RsmA subfamily.

It localises to the cytoplasm. The enzyme catalyses adenosine(1518)/adenosine(1519) in 16S rRNA + 4 S-adenosyl-L-methionine = N(6)-dimethyladenosine(1518)/N(6)-dimethyladenosine(1519) in 16S rRNA + 4 S-adenosyl-L-homocysteine + 4 H(+). Functionally, specifically dimethylates two adjacent adenosines (A1518 and A1519) in the loop of a conserved hairpin near the 3'-end of 16S rRNA in the 30S particle. May play a critical role in biogenesis of 30S subunits. The sequence is that of Ribosomal RNA small subunit methyltransferase A from Ureaplasma urealyticum serovar 10 (strain ATCC 33699 / Western).